The chain runs to 201 residues: NAD(P)H dehydrogenase (quinone) (201 aa).

The region spanning 4-192 (VLVLYYSSYG…TIARFQGQHI (189 aa)) is the Flavodoxin-like domain. Residues 10-15 (SSYGHV) and 80-82 (TRF) contribute to the FMN site. Tyr-12 contacts NAD(+). Trp-100 contacts substrate. FMN is bound by residues 115 to 121 (STASQHG) and His-136.

The protein belongs to the WrbA family. Requires FMN as cofactor.

The catalysed reaction is a quinone + NADH + H(+) = a quinol + NAD(+). It carries out the reaction a quinone + NADPH + H(+) = a quinol + NADP(+). In Chromohalobacter salexigens (strain ATCC BAA-138 / DSM 3043 / CIP 106854 / NCIMB 13768 / 1H11), this protein is NAD(P)H dehydrogenase (quinone).